Reading from the N-terminus, the 264-residue chain is Triosephosphate isomerase (264 aa).

Residue 13–15 participates in substrate binding; sequence NWK. Histidine 98 functions as the Electrophile in the catalytic mechanism. Glutamate 170 functions as the Proton acceptor in the catalytic mechanism. Substrate-binding positions include glycine 176, serine 216, and 237–238; that span reads GG.

The protein belongs to the triosephosphate isomerase family. As to quaternary structure, homodimer.

The protein localises to the cytoplasm. It catalyses the reaction D-glyceraldehyde 3-phosphate = dihydroxyacetone phosphate. The protein operates within carbohydrate biosynthesis; gluconeogenesis. It participates in carbohydrate degradation; glycolysis; D-glyceraldehyde 3-phosphate from glycerone phosphate: step 1/1. Functionally, involved in the gluconeogenesis. Catalyzes stereospecifically the conversion of dihydroxyacetone phosphate (DHAP) to D-glyceraldehyde-3-phosphate (G3P). The protein is Triosephosphate isomerase of Protochlamydia amoebophila (strain UWE25).